A 500-amino-acid chain; its full sequence is Catalase (500 aa).

Residues His59 and Asn131 contribute to the active site. Position 339 (Tyr339) interacts with heme.

This sequence belongs to the catalase family. Heme serves as cofactor.

The catalysed reaction is 2 H2O2 = O2 + 2 H2O. Functionally, decomposes hydrogen peroxide into water and oxygen; serves to protect cells from the toxic effects of hydrogen peroxide. The sequence is that of Catalase (katA) from Neisseria gonorrhoeae.